The sequence spans 624 residues: Glutamine--fructose-6-phosphate aminotransferase [isomerizing] (624 aa).

C2 serves as the catalytic Nucleophile; for GATase activity. Residues 2–225 (CGIVGYVGRR…QDQAVVITAD (224 aa)) form the Glutamine amidotransferase type-2 domain. SIS domains follow at residues 297–436 (SDQE…ARGT) and 469–614 (LAHR…VDKP). The active-site For Fru-6P isomerization activity is the K619.

As to quaternary structure, homodimer.

It localises to the cytoplasm. It catalyses the reaction D-fructose 6-phosphate + L-glutamine = D-glucosamine 6-phosphate + L-glutamate. In terms of biological role, catalyzes the first step in hexosamine metabolism, converting fructose-6P into glucosamine-6P using glutamine as a nitrogen source. The polypeptide is Glutamine--fructose-6-phosphate aminotransferase [isomerizing] (Mycobacterium bovis (strain ATCC BAA-935 / AF2122/97)).